Here is a 570-residue protein sequence, read N- to C-terminus: Proline--tRNA ligase (570 aa).

It belongs to the class-II aminoacyl-tRNA synthetase family. ProS type 1 subfamily. As to quaternary structure, homodimer.

It localises to the cytoplasm. It catalyses the reaction tRNA(Pro) + L-proline + ATP = L-prolyl-tRNA(Pro) + AMP + diphosphate. In terms of biological role, catalyzes the attachment of proline to tRNA(Pro) in a two-step reaction: proline is first activated by ATP to form Pro-AMP and then transferred to the acceptor end of tRNA(Pro). As ProRS can inadvertently accommodate and process non-cognate amino acids such as alanine and cysteine, to avoid such errors it has two additional distinct editing activities against alanine. One activity is designated as 'pretransfer' editing and involves the tRNA(Pro)-independent hydrolysis of activated Ala-AMP. The other activity is designated 'posttransfer' editing and involves deacylation of mischarged Ala-tRNA(Pro). The misacylated Cys-tRNA(Pro) is not edited by ProRS. The sequence is that of Proline--tRNA ligase from Clostridium acetobutylicum (strain ATCC 824 / DSM 792 / JCM 1419 / IAM 19013 / LMG 5710 / NBRC 13948 / NRRL B-527 / VKM B-1787 / 2291 / W).